A 161-amino-acid chain; its full sequence is 6,7-dimethyl-8-ribityllumazine synthase (161 aa).

Residues Trp26, Ser58–Glu60, and Val81–Ile83 contribute to the 5-amino-6-(D-ribitylamino)uracil site. Gly86–Thr87 contacts (2S)-2-hydroxy-3-oxobutyl phosphate. The active-site Proton donor is His89. Residue Phe114 participates in 5-amino-6-(D-ribitylamino)uracil binding. Residue Arg128 coordinates (2S)-2-hydroxy-3-oxobutyl phosphate.

It belongs to the DMRL synthase family.

The catalysed reaction is (2S)-2-hydroxy-3-oxobutyl phosphate + 5-amino-6-(D-ribitylamino)uracil = 6,7-dimethyl-8-(1-D-ribityl)lumazine + phosphate + 2 H2O + H(+). Its pathway is cofactor biosynthesis; riboflavin biosynthesis; riboflavin from 2-hydroxy-3-oxobutyl phosphate and 5-amino-6-(D-ribitylamino)uracil: step 1/2. In terms of biological role, catalyzes the formation of 6,7-dimethyl-8-ribityllumazine by condensation of 5-amino-6-(D-ribitylamino)uracil with 3,4-dihydroxy-2-butanone 4-phosphate. This is the penultimate step in the biosynthesis of riboflavin. This is 6,7-dimethyl-8-ribityllumazine synthase from Streptomyces avermitilis (strain ATCC 31267 / DSM 46492 / JCM 5070 / NBRC 14893 / NCIMB 12804 / NRRL 8165 / MA-4680).